The primary structure comprises 397 residues: Tryptophan synthase beta chain (397 aa).

N6-(pyridoxal phosphate)lysine is present on lysine 86.

The protein belongs to the TrpB family. Tetramer of two alpha and two beta chains. It depends on pyridoxal 5'-phosphate as a cofactor.

The enzyme catalyses (1S,2R)-1-C-(indol-3-yl)glycerol 3-phosphate + L-serine = D-glyceraldehyde 3-phosphate + L-tryptophan + H2O. It participates in amino-acid biosynthesis; L-tryptophan biosynthesis; L-tryptophan from chorismate: step 5/5. In terms of biological role, the beta subunit is responsible for the synthesis of L-tryptophan from indole and L-serine. In Aeromonas hydrophila subsp. hydrophila (strain ATCC 7966 / DSM 30187 / BCRC 13018 / CCUG 14551 / JCM 1027 / KCTC 2358 / NCIMB 9240 / NCTC 8049), this protein is Tryptophan synthase beta chain.